Here is a 589-residue protein sequence, read N- to C-terminus: Pyruvate kinase (589 aa).

A substrate-binding site is contributed by Arg32. Positions 34, 36, 66, and 67 each coordinate K(+). Position 34 to 37 (34 to 37) interacts with ATP; that stretch reads NFSH. 2 residues coordinate ATP: Arg73 and Lys157. Position 223 (Glu223) interacts with Mg(2+). Substrate-binding residues include Gly246, Asp247, and Thr279. A Mg(2+)-binding site is contributed by Asp247.

Belongs to the pyruvate kinase family. This sequence in the C-terminal section; belongs to the PEP-utilizing enzyme family. As to quaternary structure, homotetramer. Mg(2+) is required as a cofactor. It depends on K(+) as a cofactor.

The enzyme catalyses pyruvate + ATP = phosphoenolpyruvate + ADP + H(+). The protein operates within carbohydrate degradation; glycolysis; pyruvate from D-glyceraldehyde 3-phosphate: step 5/5. Its activity is regulated as follows. Strongly activated by glucose-6-phosphate, ribose-5-phosphate and fructose-6-phosphate. Weak activator AMP and weak inhibitor fructose-1,6-bisphosphate can act as strong inhibitors in the presence of strong activators. This chain is Pyruvate kinase (pyk), found in Lactobacillus delbrueckii subsp. bulgaricus.